A 637-amino-acid chain; its full sequence is Transcription factor GLABRA 3 (637 aa).

Positions 437 to 486 (DETGNHAVLEKKRREKLNERFMTLRKIIPSINKIDKVSILDDTIEYLQEL) constitute a bHLH domain. Positions 497–521 (RESTDTETRGTMTMKRKKPCDAGER) are disordered. Positions 541–637 (NVGEAEPADT…EALQRVAWIC (97 aa)) are binding with MYB0/GL1 and MYB23.

Efficient DNA binding requires dimerization with another bHLH protein. Homodimer and heterodimer with BHLH2. Interacts directly with TTG1 and MYB0/GL1 to form a complex. Its interaction with TRY prevents MYB0/GL1 binding. Interacts with MYB75/PAP1, MYB90/PAP2, TT2, CPC, MYB23 and MYB66/WER. Interacts with MYB82. As to expression, mostly expressed in roots and flowers. Also present in stems and leaves, and, to a lower extent, in hypocotyls. Expressed in epidermal root hair cells (trichoblasts) and moves to root hairless cells (atrichoblasts) by a cell-to-cell movement through plasmodesmata (at protein level).

The protein resides in the nucleus. Transcription activator, when associated with MYB75/PAP1, MYB90/PAP2 or TT2. Involved in epidermal cell fate specification. Negatively regulates stomata formation, but, in association with TTG1 and MYB0/GL1, promotes trichome formation, branching and endoreplication. Also regulates trichome cell wall maturation. Together with MYB66/WER, promotes the formation of non-hair cells in root epidermis cells in the N position. Whereas together with CPC, promotes the formation of hair cells in root epidermis cells in the H position by inhibiting non-hair cell formation. Also seems to play a role in the activation of anthocyanin biosynthesis, probably together with MYB75/PAP1. Activates the transcription of GL2. The sequence is that of Transcription factor GLABRA 3 (GL3) from Arabidopsis thaliana (Mouse-ear cress).